Reading from the N-terminus, the 443-residue chain is Probable glycine dehydrogenase (decarboxylating) subunit 1 (443 aa).

The protein belongs to the GcvP family. N-terminal subunit subfamily. As to quaternary structure, the glycine cleavage system is composed of four proteins: P, T, L and H. In this organism, the P 'protein' is a heterodimer of two subunits.

The enzyme catalyses N(6)-[(R)-lipoyl]-L-lysyl-[glycine-cleavage complex H protein] + glycine + H(+) = N(6)-[(R)-S(8)-aminomethyldihydrolipoyl]-L-lysyl-[glycine-cleavage complex H protein] + CO2. The glycine cleavage system catalyzes the degradation of glycine. The P protein binds the alpha-amino group of glycine through its pyridoxal phosphate cofactor; CO(2) is released and the remaining methylamine moiety is then transferred to the lipoamide cofactor of the H protein. This chain is Probable glycine dehydrogenase (decarboxylating) subunit 1, found in Maridesulfovibrio salexigens (strain ATCC 14822 / DSM 2638 / NCIMB 8403 / VKM B-1763) (Desulfovibrio salexigens).